Consider the following 153-residue polypeptide: Inner membrane protein YjiG (153 aa).

Topologically, residues 1–31 (MTTQVRKNVMDMFIDGARRGFTIATTNLLPN) are periplasmic. The helical transmembrane segment at 32 to 52 (VVMAFVIIQALKITGLLDWVG) threads the bilayer. The Cytoplasmic portion of the chain corresponds to 53 to 68 (HICEPVMALWGLPGEA). 2 helical membrane-spanning segments follow: residues 69-89 (ATVL…AASL) and 90-110 (ATAG…MYLM). Topologically, residues 111–132 (GNPVQNVGRCLGTAEVNAKYYP) are cytoplasmic. Residues 133-153 (HIITVCVINALLSIWVMQLIV) form a helical membrane-spanning segment.

It belongs to the SpmB family.

The protein localises to the cell inner membrane. The protein is Inner membrane protein YjiG (yjiG) of Escherichia coli O157:H7.